Here is a 258-residue protein sequence, read N- to C-terminus: MSDTLYWHVSGQGPDLVLVHGWGMNGAVWQQTVDALEADFRVHVVDLPGYGHSAHCHAQDLEEIAQQLLAEAPKRAIWVGWSLGGLVATHMALHHSDYVSKLVTVASSPKFAAAKEPVLWRGIQPNVLSAFTEQLVEDFQTTIERFMALQAMGSPSARQDVKQLKQAVLSRPLPNPDSLLAGLKMLSDVDLREQLPEISVPMLRLYGRLDGLVPIKVAKDLGRALPHTEQYIFTQSSHAPFMTEADAFCSELVSFAQK.

Residues 16-244 form the AB hydrolase-1 domain; that stretch reads LVLVHGWGMN…QSSHAPFMTE (229 aa). Substrate is bound by residues Trp22, 82–83, and 146–150; these read SL and FMALQ. The active-site Nucleophile is the Ser82. Residues Asp210 and His238 contribute to the active site. His238 is a substrate binding site.

It belongs to the AB hydrolase superfamily. Carboxylesterase BioH family. In terms of assembly, monomer.

Its subcellular location is the cytoplasm. The catalysed reaction is 6-carboxyhexanoyl-[ACP] methyl ester + H2O = 6-carboxyhexanoyl-[ACP] + methanol + H(+). The protein operates within cofactor biosynthesis; biotin biosynthesis. Functionally, the physiological role of BioH is to remove the methyl group introduced by BioC when the pimeloyl moiety is complete. It allows to synthesize pimeloyl-ACP via the fatty acid synthetic pathway through the hydrolysis of the ester bonds of pimeloyl-ACP esters. The protein is Pimeloyl-[acyl-carrier protein] methyl ester esterase of Vibrio atlanticus (strain LGP32) (Vibrio splendidus (strain Mel32)).